A 228-amino-acid polypeptide reads, in one-letter code: MDNNFKIKDLPKNERPQERLIRYGAEVLSNSELLAVILRTGTKNQNIMMLASSLIKETGGLDQLFNQSIEELTKIKGIGVTKAVQILALSELSKRFKTYKSGNEYKISTPLDVSNLVMEDMKYLKQEKLKILILNTKNIVTYIRDVFIGTLNSSIVHPREIFCEAIKKNGASIIICHNHPSGDPTPSKEDINITLRLKECGKLIGIDLLDHIIIGENKYVSMKEKGTI.

Positions 106–228 (KISTPLDVSN…YVSMKEKGTI (123 aa)) constitute an MPN domain. Zn(2+) contacts are provided by histidine 177, histidine 179, and aspartate 190. Positions 177-190 (HNHPSGDPTPSKED) match the JAMM motif motif.

It belongs to the UPF0758 family.

The protein is UPF0758 protein CLB_3028 of Clostridium botulinum (strain ATCC 19397 / Type A).